Consider the following 109-residue polypeptide: Ribonuclease P protein component (109 aa).

The protein belongs to the RnpA family. Consists of a catalytic RNA component (M1 or rnpB) and a protein subunit.

The enzyme catalyses Endonucleolytic cleavage of RNA, removing 5'-extranucleotides from tRNA precursor.. Functionally, RNaseP catalyzes the removal of the 5'-leader sequence from pre-tRNA to produce the mature 5'-terminus. It can also cleave other RNA substrates such as 4.5S RNA. The protein component plays an auxiliary but essential role in vivo by binding to the 5'-leader sequence and broadening the substrate specificity of the ribozyme. This chain is Ribonuclease P protein component, found in Nitratiruptor sp. (strain SB155-2).